Consider the following 255-residue polypeptide: Ribosomal RNA small subunit methyltransferase A (255 aa).

Residues Asn-12, Leu-14, Gly-39, Glu-60, Asp-84, and Asn-102 each coordinate S-adenosyl-L-methionine.

Belongs to the class I-like SAM-binding methyltransferase superfamily. rRNA adenine N(6)-methyltransferase family. RsmA subfamily.

The protein localises to the cytoplasm. It carries out the reaction adenosine(1518)/adenosine(1519) in 16S rRNA + 4 S-adenosyl-L-methionine = N(6)-dimethyladenosine(1518)/N(6)-dimethyladenosine(1519) in 16S rRNA + 4 S-adenosyl-L-homocysteine + 4 H(+). Its function is as follows. Specifically dimethylates two adjacent adenosines (A1518 and A1519) in the loop of a conserved hairpin near the 3'-end of 16S rRNA in the 30S particle. May play a critical role in biogenesis of 30S subunits. In Methylobacillus flagellatus (strain ATCC 51484 / DSM 6875 / VKM B-1610 / KT), this protein is Ribosomal RNA small subunit methyltransferase A.